Reading from the N-terminus, the 475-residue chain is Probable pectate lyase 7 (475 aa).

The N-terminal stretch at 1–24 is a signal peptide; sequence METARLFKLVCVICIASLIPTIRA. 2 N-linked (GlcNAc...) asparagine glycosylation sites follow: asparagine 67 and asparagine 96. Residues 91–117 are disordered; the sequence is ISSPTNSTRRSLTGRGKGKGKGKWSKL. Positions 271, 295, and 299 each coordinate Ca(2+). Arginine 351 is an active-site residue.

It belongs to the polysaccharide lyase 1 family. The cofactor is Ca(2+).

It catalyses the reaction Eliminative cleavage of (1-&gt;4)-alpha-D-galacturonan to give oligosaccharides with 4-deoxy-alpha-D-galact-4-enuronosyl groups at their non-reducing ends.. It functions in the pathway glycan metabolism; pectin degradation; 2-dehydro-3-deoxy-D-gluconate from pectin: step 2/5. The polypeptide is Probable pectate lyase 7 (Arabidopsis thaliana (Mouse-ear cress)).